The chain runs to 443 residues: Ribosomal protein uS12 methylthiotransferase RimO (443 aa).

Residues 1–116 enclose the MTTase N-terminal domain; it reads MKFHLISLGC…IAEYVGKLIA (116 aa). [4Fe-4S] cluster contacts are provided by C10, C45, C79, C154, C158, and C161. The Radical SAM core domain maps to 140–370; it reads STPFFRAWVK…LELQQELSTE (231 aa). A TRAM domain is found at 373 to 441; the sequence is KKYVGTVQKV…QYDLVGGVVS (69 aa).

Belongs to the methylthiotransferase family. RimO subfamily. [4Fe-4S] cluster serves as cofactor.

The protein resides in the cytoplasm. The catalysed reaction is L-aspartate(89)-[ribosomal protein uS12]-hydrogen + (sulfur carrier)-SH + AH2 + 2 S-adenosyl-L-methionine = 3-methylsulfanyl-L-aspartate(89)-[ribosomal protein uS12]-hydrogen + (sulfur carrier)-H + 5'-deoxyadenosine + L-methionine + A + S-adenosyl-L-homocysteine + 2 H(+). Functionally, catalyzes the methylthiolation of an aspartic acid residue of ribosomal protein uS12. This is Ribosomal protein uS12 methylthiotransferase RimO from Desulfotalea psychrophila (strain LSv54 / DSM 12343).